Consider the following 535-residue polypeptide: Bifunctional purine biosynthesis protein PurH (535 aa).

Residues 6-151 (TRLPIRRALI…KNHKDVAIVV (146 aa)) enclose the MGS-like domain.

It belongs to the PurH family.

The enzyme catalyses (6R)-10-formyltetrahydrofolate + 5-amino-1-(5-phospho-beta-D-ribosyl)imidazole-4-carboxamide = 5-formamido-1-(5-phospho-D-ribosyl)imidazole-4-carboxamide + (6S)-5,6,7,8-tetrahydrofolate. It catalyses the reaction IMP + H2O = 5-formamido-1-(5-phospho-D-ribosyl)imidazole-4-carboxamide. Its pathway is purine metabolism; IMP biosynthesis via de novo pathway; 5-formamido-1-(5-phospho-D-ribosyl)imidazole-4-carboxamide from 5-amino-1-(5-phospho-D-ribosyl)imidazole-4-carboxamide (10-formyl THF route): step 1/1. It participates in purine metabolism; IMP biosynthesis via de novo pathway; IMP from 5-formamido-1-(5-phospho-D-ribosyl)imidazole-4-carboxamide: step 1/1. This Pseudomonas aeruginosa (strain LESB58) protein is Bifunctional purine biosynthesis protein PurH.